A 338-amino-acid chain; its full sequence is Glycerol-3-phosphate dehydrogenase [NAD(P)+] (338 aa).

NADPH-binding residues include S13, W14, and K108. Sn-glycerol 3-phosphate is bound by residues K108, G139, and S141. Residue A143 coordinates NADPH. The sn-glycerol 3-phosphate site is built by K194, D247, S257, R258, and N259. Residue K194 is the Proton acceptor of the active site. Position 258 (R258) interacts with NADPH. Residues V282 and E284 each coordinate NADPH.

It belongs to the NAD-dependent glycerol-3-phosphate dehydrogenase family.

Its subcellular location is the cytoplasm. The catalysed reaction is sn-glycerol 3-phosphate + NAD(+) = dihydroxyacetone phosphate + NADH + H(+). The enzyme catalyses sn-glycerol 3-phosphate + NADP(+) = dihydroxyacetone phosphate + NADPH + H(+). The protein operates within membrane lipid metabolism; glycerophospholipid metabolism. Its function is as follows. Catalyzes the reduction of the glycolytic intermediate dihydroxyacetone phosphate (DHAP) to sn-glycerol 3-phosphate (G3P), the key precursor for phospholipid synthesis. The sequence is that of Glycerol-3-phosphate dehydrogenase [NAD(P)+] from Streptococcus pneumoniae (strain Taiwan19F-14).